Reading from the N-terminus, the 402-residue chain is Coiled-coil domain-containing protein 188 (402 aa).

Disordered regions lie at residues 1 to 30, 50 to 74, and 108 to 131; these read MEGL…GGGL, HSVQ…EGEA, and HPGS…PCPC. The stretch at 154–189 forms a coiled coil; that stretch reads GLLGSAEQSFLQLEQENHSLKRQNQELREQLGALLG. A helical transmembrane segment spans residues 347–363; it reads LLLGALLVWTAAYVYVV.

The protein localises to the membrane. This Homo sapiens (Human) protein is Coiled-coil domain-containing protein 188.